The primary structure comprises 236 residues: tRNA (guanine-N(7)-)-methyltransferase (236 aa).

The S-adenosyl-L-methionine site is built by D35, E60, N87, and D113. The active site involves D113. Residues K117 and D149 each contribute to the substrate site. Positions 217-236 (EFEQHWQEIDNPGNAPTPDA) are disordered.

The protein belongs to the class I-like SAM-binding methyltransferase superfamily. TrmB family.

It catalyses the reaction guanosine(46) in tRNA + S-adenosyl-L-methionine = N(7)-methylguanosine(46) in tRNA + S-adenosyl-L-homocysteine. The protein operates within tRNA modification; N(7)-methylguanine-tRNA biosynthesis. Catalyzes the formation of N(7)-methylguanine at position 46 (m7G46) in tRNA. This chain is tRNA (guanine-N(7)-)-methyltransferase, found in Synechococcus sp. (strain CC9902).